A 371-amino-acid polypeptide reads, in one-letter code: Histidinol-phosphate aminotransferase (371 aa).

K228 is subject to N6-(pyridoxal phosphate)lysine.

This sequence belongs to the class-II pyridoxal-phosphate-dependent aminotransferase family. Histidinol-phosphate aminotransferase subfamily. Pyridoxal 5'-phosphate serves as cofactor.

The enzyme catalyses L-histidinol phosphate + 2-oxoglutarate = 3-(imidazol-4-yl)-2-oxopropyl phosphate + L-glutamate. It participates in amino-acid biosynthesis; L-histidine biosynthesis; L-histidine from 5-phospho-alpha-D-ribose 1-diphosphate: step 7/9. In Methanococcus maripaludis (strain C5 / ATCC BAA-1333), this protein is Histidinol-phosphate aminotransferase.